The sequence spans 817 residues: Cargo-transport protein YPP1 (817 aa).

This sequence belongs to the YPP1 family. Interacts with STT4 and ribosomes.

The protein localises to the cytoplasmic granule. The protein resides in the cell membrane. In terms of biological role, involved in endocytosis. The polypeptide is Cargo-transport protein YPP1 (YPP1) (Saccharomyces cerevisiae (strain YJM789) (Baker's yeast)).